The primary structure comprises 515 residues: Protein pid-4 (515 aa).

The tract at residues 496–515 (DRSPQKFKFPASGSYMKPAN) is disordered.

As to quaternary structure, may interact with pid-2, app-1 and prmt-5.

It localises to the cytoplasm. Its subcellular location is the perinuclear region. The protein resides in the P-body. Together with pid-5, it is involved in gene silencing mediated by a class of 21 nucleotide PIWI-interacting RNAs (piRNAs) that possess a uracil residue at the 5'-end (also called 21U-RNAs) and guide the Piwi protein prg-1 to its DNA targets for silencing. Together with pid-5, it is required for the biogenesis of secondary and tertiary 22G-siRNAs. Specifically, promotes the production of 22G-siRNAs from the 5' end of target mRNAs. Together with pid-5, plays a role in small RNA-directed transgenerational epigenetic inheritance (also called RNAe) over several generations and germline immortality. Together with pid-5, plays a role in the formation of liquid-like condensates in the cytoplasm called Z granules. The protein is Protein pid-4 of Caenorhabditis elegans.